Reading from the N-terminus, the 673-residue chain is uncharacterized protein (673 aa).

The signal sequence occupies residues 1–24; it reads MKIHNIIKIIIVVCLEGFALTSFA. 6 consecutive transmembrane segments (helical) span residues 224–244, 253–273, 410–430, 436–456, 469–489, and 562–582; these read NAIG…MVLN, IALF…LGPL, IILI…LYFI, CMIT…MMLF, VSLS…LLIT, and VVSI…FYYF. The segment at 624–673 is disordered; that stretch reads AQATQGKPPSSGDMPGDGGSKRSEGQKGDDSFISSGGNSSGDSLSSSGGK. Positions 642-653 are enriched in basic and acidic residues; sequence GSKRSEGQKGDD. A compositionally biased stretch (low complexity) spans 654-673; sequence SFISSGGNSSGDSLSSSGGK.

This sequence belongs to the TrbL/VirB6 family.

It localises to the cell membrane. This is an uncharacterized protein from Rickettsia bellii (strain RML369-C).